A 318-amino-acid chain; its full sequence is 4-hydroxy-3-methylbut-2-enyl diphosphate reductase (318 aa).

C12 provides a ligand contact to [4Fe-4S] cluster. Residues H41 and H74 each coordinate (2E)-4-hydroxy-3-methylbut-2-enyl diphosphate. Dimethylallyl diphosphate-binding residues include H41 and H74. Isopentenyl diphosphate is bound by residues H41 and H74. C96 provides a ligand contact to [4Fe-4S] cluster. H124 serves as a coordination point for (2E)-4-hydroxy-3-methylbut-2-enyl diphosphate. H124 is a binding site for dimethylallyl diphosphate. An isopentenyl diphosphate-binding site is contributed by H124. The Proton donor role is filled by E126. (2E)-4-hydroxy-3-methylbut-2-enyl diphosphate is bound at residue T168. [4Fe-4S] cluster is bound at residue C198. Residues S226, S227, N228, and S270 each contribute to the (2E)-4-hydroxy-3-methylbut-2-enyl diphosphate site. Residues S226, S227, N228, and S270 each coordinate dimethylallyl diphosphate. Positions 226, 227, 228, and 270 each coordinate isopentenyl diphosphate.

This sequence belongs to the IspH family. [4Fe-4S] cluster is required as a cofactor.

It catalyses the reaction isopentenyl diphosphate + 2 oxidized [2Fe-2S]-[ferredoxin] + H2O = (2E)-4-hydroxy-3-methylbut-2-enyl diphosphate + 2 reduced [2Fe-2S]-[ferredoxin] + 2 H(+). It carries out the reaction dimethylallyl diphosphate + 2 oxidized [2Fe-2S]-[ferredoxin] + H2O = (2E)-4-hydroxy-3-methylbut-2-enyl diphosphate + 2 reduced [2Fe-2S]-[ferredoxin] + 2 H(+). It functions in the pathway isoprenoid biosynthesis; dimethylallyl diphosphate biosynthesis; dimethylallyl diphosphate from (2E)-4-hydroxy-3-methylbutenyl diphosphate: step 1/1. It participates in isoprenoid biosynthesis; isopentenyl diphosphate biosynthesis via DXP pathway; isopentenyl diphosphate from 1-deoxy-D-xylulose 5-phosphate: step 6/6. Functionally, catalyzes the conversion of 1-hydroxy-2-methyl-2-(E)-butenyl 4-diphosphate (HMBPP) into a mixture of isopentenyl diphosphate (IPP) and dimethylallyl diphosphate (DMAPP). Acts in the terminal step of the DOXP/MEP pathway for isoprenoid precursor biosynthesis. In Psychrobacter sp. (strain PRwf-1), this protein is 4-hydroxy-3-methylbut-2-enyl diphosphate reductase.